We begin with the raw amino-acid sequence, 640 residues long: (Z)-beta-ocimene synthase TPS13PK, chloroplastic (640 aa).

The transit peptide at 1–95 (MAALVSTVSS…PFKDEAYVKR (95 aa)) directs the protein to the chloroplast. The interval 50-69 (MSTNNNNNNNQKNSSRRSAN) is disordered. A compositionally biased stretch (polar residues) spans 60 to 69 (QKNSSRRSAN). Positions 334, 371, 375, 515, and 518 each coordinate (2E)-geranyl diphosphate. Mg(2+) contacts are provided by Asp-371 and Asp-375. The DDXXD motif motif lies at 371 to 375 (DDIYD). Mg(2+) contacts are provided by Asp-518, Thr-522, and Glu-526.

This sequence belongs to the terpene synthase family. As to quaternary structure, monomer. Requires Mg(2+) as cofactor.

The protein resides in the plastid. It is found in the chloroplast. It carries out the reaction (2E)-geranyl diphosphate = (Z)-beta-ocimene + diphosphate. It functions in the pathway secondary metabolite biosynthesis; terpenoid biosynthesis. Its function is as follows. Involved in monoterpene (C10) olefins biosynthesis, constituants of cannabinoids and terpenoids-rich resins. Catalyzes mainly the conversion of (2E)-geranyl diphosphate to (Z)-beta-ocimene. In Cannabis sativa (Hemp), this protein is (Z)-beta-ocimene synthase TPS13PK, chloroplastic.